Here is an 846-residue protein sequence, read N- to C-terminus: FNIP repeat-containing protein DDB_G0289381 (846 aa).

Residues 1–11 (MKLLSFKKKPS) are compositionally biased toward basic residues. The disordered stretch occupies residues 1–39 (MKLLSFKKKPSLTKSQSCPDKLKNLKEQQKDPKNGANYD). Over residues 20–33 (DKLKNLKEQQKDPK) the composition is skewed to basic and acidic residues. 4 FNIP repeats span residues 159 to 193 (IPNHIEKLIFSNEFDKPIKAGTIPQSVVEIEFGEK), 194 to 239 (FNQV…FGNN), 240 to 283 (FDQI…FQEN), and 284 to 325 (FNQP…YGGD). The interval 362-384 (SSISLDISGGGSGSGSGVNSTTT) is disordered. FNIP repeat units lie at residues 458 to 500 (FQQL…FGDG), 501 to 546 (FNQQ…FGKS), and 654 to 693 (FNQSIKNLPENLTSLSLGTSFSQNLINLPNSLIELKMFNK). A disordered region spans residues 702-734 (SNNNNENNNENNNENNNENNNENNNENNNNTNS). Positions 702–734 (SNNNNENNNENNNENNNENNNENNNENNNNTNS) form a coiled coil.

This chain is FNIP repeat-containing protein DDB_G0289381, found in Dictyostelium discoideum (Social amoeba).